The primary structure comprises 176 residues: HTH-type transcriptional regulator DctR (176 aa).

The 66-residue stretch at 109 to 174 (VPEANVSLSR…ELVRHQHIDY (66 aa)) folds into the HTH luxR-type domain. A DNA-binding region (H-T-H motif) is located at residues 133–152 (TEDILEKLKISLKTFYCHKH).

Its function is as follows. May act as a transcriptional regulator of dctA. Could be involved in the regulation of the genes coding for the type III secretion system in enterohaemorragic strains. This Escherichia coli O157:H7 protein is HTH-type transcriptional regulator DctR (dctR).